A 310-amino-acid chain; its full sequence is Polyprenyl transferase ntnF (310 aa).

Transmembrane regions (helical) follow at residues 30-50, 63-83, 110-130, 154-174, 185-205, 230-250, 255-275, and 286-306; these read HTPEGLSTASIGWLALFFYAI, FLGIFACYQITHGVFCMWNDI, AMVAFIIGLALSLGVTYAMLG, IWAPQAVLGLTMAACVLPPWV, LPASLFGAIFSWLVYLDLIYA, ACLTVLGALQIAFFAVAAFEA, FLWVFGIAVWAISVPWSILSL, and IFLVNAILGIYLAAVSGTDVW.

This sequence belongs to the UbiA prenyltransferase family. The cofactor is Mg(2+).

Its subcellular location is the membrane. The protein operates within secondary metabolite biosynthesis; terpenoid biosynthesis. Its function is as follows. olyprenyl transferase; part of the gene cluster that mediates the biosynthesis of the meroterpenoids nectripenoids A and B, as well as cochliquninone D and isocochliquninone E. The pathway probably begins with the HR-PKS ntnH that catalyzes two chain-extension steps to form a reduced triketide, which then primes the SAT domain in the NR-PKS ntnG to initiate three more cycles of extension to give a linear hexaketide corresponding to the polyketide part of nectripenoids. The FAD-dependent monooxygenase ntnJ then performs an oxidative decarboxylation at C11 of the ntnH/ntnG product, via an electrophilic aromatic hydroxylation with concomitant ipso-decarboxylation. The membrane-bound polyprenyl transferase ntnF then introduces a farnesyl group before the FAD-dependent monooxygenase ntnK functions as the first epoxidase on terminal C12'-C13' olefin, followed by a second epoxidation on C7'-C8' catalyzed by ntnA. The terpene cyclase/mutase ntnI then initiates the sequential tricyclic ring formation through protonation of the terminal epoxide and catalyzes the regioselective and stereoselective 6/6/6-tricyclic ring formation. The cytochrome P450 monooxygenase ntnM may then hydroxylate C1'. The protein is Polyprenyl transferase ntnF of Nectria sp.